Consider the following 232-residue polypeptide: Orotidine 5'-phosphate decarboxylase (232 aa).

Substrate-binding positions include D10, K32, 59 to 68 (DLKFHDIPNT), T119, R180, Q189, G209, and R210. Residue K61 is the Proton donor of the active site.

Belongs to the OMP decarboxylase family. Type 1 subfamily. As to quaternary structure, homodimer.

It catalyses the reaction orotidine 5'-phosphate + H(+) = UMP + CO2. Its pathway is pyrimidine metabolism; UMP biosynthesis via de novo pathway; UMP from orotate: step 2/2. Its function is as follows. Catalyzes the decarboxylation of orotidine 5'-monophosphate (OMP) to uridine 5'-monophosphate (UMP). The protein is Orotidine 5'-phosphate decarboxylase of Actinobacillus succinogenes (strain ATCC 55618 / DSM 22257 / CCUG 43843 / 130Z).